The primary structure comprises 307 residues: Oxygen-dependent coproporphyrinogen-III oxidase (307 aa).

Residue S99 participates in substrate binding. Residues H103 and H113 each coordinate a divalent metal cation. H113 (proton donor) is an active-site residue. Residue 115–117 (NVR) coordinates substrate. 2 residues coordinate a divalent metal cation: H152 and H182. An important for dimerization region spans residues 247 to 282 (YVEFNLVFDRGTLFGLQSGGRTESILMSMPPVANWR). Substrate is bound at residue 265 to 267 (GGR).

The protein belongs to the aerobic coproporphyrinogen-III oxidase family. In terms of assembly, homodimer. It depends on a divalent metal cation as a cofactor.

The protein localises to the cytoplasm. The catalysed reaction is coproporphyrinogen III + O2 + 2 H(+) = protoporphyrinogen IX + 2 CO2 + 2 H2O. It functions in the pathway porphyrin-containing compound metabolism; protoporphyrin-IX biosynthesis; protoporphyrinogen-IX from coproporphyrinogen-III (O2 route): step 1/1. Functionally, involved in the heme biosynthesis. Catalyzes the aerobic oxidative decarboxylation of propionate groups of rings A and B of coproporphyrinogen-III to yield the vinyl groups in protoporphyrinogen-IX. In Burkholderia orbicola (strain MC0-3), this protein is Oxygen-dependent coproporphyrinogen-III oxidase.